The primary structure comprises 260 residues: MEDLVDELYGVDEQGSSSAAARKRRLTAEQVRALERSFEEEKRKLEPERKSELARRLGIAPRQVAVWFQNRRARWKTKQLELDFDRLRAAHDELLAGRAALAADNESLRSQVILLTEKLQANGKSPSPSPAPAEQTAVPAAPESAKSFQLEEGRCLYDAAGSTTTTNGGGGGVAMPAARVAAARAASNDSPESYFAGARSPPSSSEDDCGGAGSDDDYPSSSVLLPVDATLVGDAFEHAVAATVAADEEAPLNSWEWFWN.

Residues 1-10 are compositionally biased toward acidic residues; sequence MEDLVDELYG. 3 disordered regions span residues 1 to 24, 121 to 145, and 190 to 221; these read MEDL…ARKR, ANGK…PESA, and SPES…YPSS. Positions 19–79 form a DNA-binding region, homeobox; sequence AAARKRRLTA…NRRARWKTKQ (61 aa). A leucine-zipper region spans residues 78–122; sequence KQLELDFDRLRAAHDELLAGRAALAADNESLRSQVILLTEKLQAN. The span at 205-218 shows a compositional bias: acidic residues; the sequence is SEDDCGGAGSDDDY.

Belongs to the HD-ZIP homeobox family. Class I subfamily. As to expression, expressed in roots, leaf sheaths and blades and panicles.

It localises to the nucleus. Functionally, probable transcription factor. This is Homeobox-leucine zipper protein HOX25 (HOX25) from Oryza sativa subsp. indica (Rice).